The sequence spans 337 residues: Ketol-acid reductoisomerase (NADP(+)) (337 aa).

Positions 1–180 constitute a KARI N-terminal Rossmann domain; the sequence is MQVYYDKDAD…GGTKGGVIET (180 aa). NADP(+) is bound by residues 24–27, Arg-47, and Ser-51; that span reads YGSQ. His-106 is an active-site residue. Gly-132 lines the NADP(+) pocket. In terms of domain architecture, KARI C-terminal knotted spans 181–326; that stretch reads TFREETETDL…ARLRAMMPWI (146 aa). Mg(2+) contacts are provided by Asp-189, Glu-193, Glu-225, and Glu-229. A substrate-binding site is contributed by Ser-250.

It belongs to the ketol-acid reductoisomerase family. Mg(2+) serves as cofactor.

The catalysed reaction is (2R)-2,3-dihydroxy-3-methylbutanoate + NADP(+) = (2S)-2-acetolactate + NADPH + H(+). It carries out the reaction (2R,3R)-2,3-dihydroxy-3-methylpentanoate + NADP(+) = (S)-2-ethyl-2-hydroxy-3-oxobutanoate + NADPH + H(+). The protein operates within amino-acid biosynthesis; L-isoleucine biosynthesis; L-isoleucine from 2-oxobutanoate: step 2/4. It participates in amino-acid biosynthesis; L-valine biosynthesis; L-valine from pyruvate: step 2/4. Functionally, involved in the biosynthesis of branched-chain amino acids (BCAA). Catalyzes an alkyl-migration followed by a ketol-acid reduction of (S)-2-acetolactate (S2AL) to yield (R)-2,3-dihydroxy-isovalerate. In the isomerase reaction, S2AL is rearranged via a Mg-dependent methyl migration to produce 3-hydroxy-3-methyl-2-ketobutyrate (HMKB). In the reductase reaction, this 2-ketoacid undergoes a metal-dependent reduction by NADPH to yield (R)-2,3-dihydroxy-isovalerate. The protein is Ketol-acid reductoisomerase (NADP(+)) of Neisseria gonorrhoeae (strain ATCC 700825 / FA 1090).